The chain runs to 75 residues: Conotoxin Leo-O3 (75 aa).

The first 22 residues, M1–A22, serve as a signal peptide directing secretion. Residues D23–R42 constitute a propeptide that is removed on maturation. Disulfide bonds link C47/C60, C54/C63, and C59/C69. At C69 the chain carries Cysteine amide. Residues G70–V75 constitute a propeptide that is removed on maturation.

The protein belongs to the conotoxin O1 superfamily. Expressed by the venom duct.

The protein resides in the secreted. This chain is Conotoxin Leo-O3, found in Conus leopardus (Leopard cone).